A 251-amino-acid polypeptide reads, in one-letter code: Haloacid dehalogenase-like hydrolase domain-containing protein 3 (251 aa).

K15 is modified (N6-acetyllysine; alternate). N6-succinyllysine; alternate is present on K15. N6-acetyllysine is present on K130.

Belongs to the HAD-like hydrolase superfamily.

This Mus musculus (Mouse) protein is Haloacid dehalogenase-like hydrolase domain-containing protein 3 (Hdhd3).